A 392-amino-acid polypeptide reads, in one-letter code: NAC domain-containing protein 58 (392 aa).

The NAC domain occupies 9 to 173; the sequence is LPPGFRFHPT…DWVLCRIYKK (165 aa). The disordered stretch occupies residues 317 to 345; sequence STSAGAVVEPPAVTGKRKRSSDGGEPTIQ.

Expressed in leaves, nodes, internodes and mature seeds. Highly expressed in roots. Expressed in leaf sheaths, flag leaves and inflorescences. Expressed in primary and lateral roots, particularly in the vascular tissues. Expressed in the primary phloem of the culm and leaf sheaths. Expressed principally in the primary phloem and in the peripheral zone of the leaf vascular bundles. Expressed in the floral tissues.

Its subcellular location is the nucleus. In terms of biological role, transcription factor that acts as a positive regulator of the jasmonate (JA) pathway to mediate leaf senescence. May directly regulate LOX2, AOC, AOS2, AOC1 and OPR7, which are genes involved in the biosynthesis of JA. Regulates positively leaf senescence by directly targeting senescence-associated genes (SAGs) related to chlorophyll degradation, nutrient transport and other genes associated with abscisic acid-induced leaf senescence. Transcription activator that plays a role in mediating abiotic stress responses through the abscisic acid (ABA) pathway. Possesses transcriptional activator activity in yeast. This Oryza sativa subsp. japonica (Rice) protein is NAC domain-containing protein 58.